Here is a 101-residue protein sequence, read N- to C-terminus: Small ribosomal subunit protein uS14 (101 aa).

Belongs to the universal ribosomal protein uS14 family. Part of the 30S ribosomal subunit. Contacts proteins S3 and S10.

Functionally, binds 16S rRNA, required for the assembly of 30S particles and may also be responsible for determining the conformation of the 16S rRNA at the A site. This chain is Small ribosomal subunit protein uS14, found in Chlamydia trachomatis serovar L2 (strain ATCC VR-902B / DSM 19102 / 434/Bu).